A 135-amino-acid chain; its full sequence is MSFFKEFREFAMRGNVVDLAVGVIIGAAFGKIVSSLVADIIMPPLGLLIGGIDFKQFALTLRPAVGDTPAVIMHYGVFIQNVFDFVIVAFAIFLAIKVINKLHQKKPKEAPGPSKEEVLLTEIRDLLKQQNEHRP.

Helical transmembrane passes span 10-30 and 76-96; these read FAMRGNVVDLAVGVIIGAAFG and GVFIQNVFDFVIVAFAIFLAI.

The protein belongs to the MscL family. As to quaternary structure, homopentamer.

The protein localises to the cell inner membrane. Functionally, channel that opens in response to stretch forces in the membrane lipid bilayer. May participate in the regulation of osmotic pressure changes within the cell. The polypeptide is Large-conductance mechanosensitive channel (Cronobacter sakazakii (strain ATCC BAA-894) (Enterobacter sakazakii)).